The chain runs to 251 residues: Flap endonuclease Xni (251 aa).

Mg(2+) is bound at residue Asp-104. In terms of domain architecture, 5'-3' exonuclease spans 160–249 (VLPRQLPDYW…IDGNLQQLRL (90 aa)). Positions 171, 172, 180, 182, and 185 each coordinate K(+). The segment at 184 to 189 (GIGPKS) is interaction with DNA.

This sequence belongs to the Xni family. Requires Mg(2+) as cofactor. The cofactor is K(+).

Has flap endonuclease activity. During DNA replication, flap endonucleases cleave the 5'-overhanging flap structure that is generated by displacement synthesis when DNA polymerase encounters the 5'-end of a downstream Okazaki fragment. The chain is Flap endonuclease Xni from Salmonella newport (strain SL254).